We begin with the raw amino-acid sequence, 470 residues long: Membrane-bound lytic murein transglycosylase F (470 aa).

An N-terminal signal peptide occupies residues 1–24; sequence MPSLKTKGAAGKFASLLLVLALSA. Positions 25-262 are non-LT domain; it reads CSRPAPPPET…RALERYFGHV (238 aa). The segment at 263–470 is LT domain; that stretch reads KRLGSSDILG…RGEDGLPPPG (208 aa). The active site involves Glu-309.

This sequence in the N-terminal section; belongs to the bacterial solute-binding protein 3 family. It in the C-terminal section; belongs to the transglycosylase Slt family.

The protein localises to the cell outer membrane. The catalysed reaction is Exolytic cleavage of the (1-&gt;4)-beta-glycosidic linkage between N-acetylmuramic acid (MurNAc) and N-acetylglucosamine (GlcNAc) residues in peptidoglycan, from either the reducing or the non-reducing ends of the peptidoglycan chains, with concomitant formation of a 1,6-anhydrobond in the MurNAc residue.. Murein-degrading enzyme that degrades murein glycan strands and insoluble, high-molecular weight murein sacculi, with the concomitant formation of a 1,6-anhydromuramoyl product. Lytic transglycosylases (LTs) play an integral role in the metabolism of the peptidoglycan (PG) sacculus. Their lytic action creates space within the PG sacculus to allow for its expansion as well as for the insertion of various structures such as secretion systems and flagella. In Thiobacillus denitrificans (strain ATCC 25259 / T1), this protein is Membrane-bound lytic murein transglycosylase F.